The sequence spans 610 residues: POU domain, class 6, transcription factor 1 (610 aa).

Positions 55–87 (SSAGAAESGGDEEGSGQSLEATEEAQLDGPVTT) are disordered. Positions 448 to 522 (EEAINLEEIR…VLERWLAEAE (75 aa)) constitute a POU-specific domain. A DNA-binding region (homeobox) is located at residues 543 to 602 (KRKRRTSFTPQAIEVLNTYFEKNSLPTGQEITEIAKELNYDREVVRVWFCNRRQTLKNTS).

It belongs to the POU transcription factor family. Class-6 subfamily. Ubiquitously expressed during embryogenesis.

It localises to the nucleus. Its function is as follows. Transcription factor that binds with high affinity to the motif 5'-TAATGARAT-3'. The chain is POU domain, class 6, transcription factor 1 (pou6f1) from Danio rerio (Zebrafish).